We begin with the raw amino-acid sequence, 612 residues long: Calcium-dependent protein kinase 27 (612 aa).

Residue glycine 2 is the site of N-myristoyl glycine attachment. Residues 23-132 (PRHAAPSSPS…AHIKRISSAG (110 aa)) are disordered. Low complexity predominate over residues 28-50 (PSSPSQPTTTSRSIPVVLPSAPS). Positions 51 to 100 (SKPPPPTQTAPPVPVVISEPPPPQPQPEPQPAAPSQPPPPQEQPSPPPPA) are enriched in pro residues. The span at 117 to 127 (SRAKKPAHIKR) shows a compositional bias: basic residues. The region spanning 150 to 408 (YSLGRKLGQG…AHEVLCHPWL (259 aa)) is the Protein kinase domain. ATP-binding positions include 156–164 (LGQGQFGTT) and lysine 179. Catalysis depends on aspartate 274, which acts as the Proton acceptor. Residues 414 to 444 (APDKPLDSAVLSRLRQFSAMNKLKKMALRVI) form an autoinhibitory domain region. 4 consecutive EF-hand domains span residues 451–486 (EEIAGLKEMFKMMDTDNSGQINYEELKAGLERVGAN), 487–522 (MKESEIYQLMQAADIDNSGTIDYGEFIAATLHLNKV), 523–558 (EREDHLYAAFQYFDKDGSGYITSDELQQACDEFGIE), and 561–592 (RLEDMIGEVDQDNDGRIDYNEFVAMMQKTTTG). 20 residues coordinate Ca(2+): aspartate 464, aspartate 466, serine 468, glutamine 470, glutamate 475, aspartate 500, aspartate 502, serine 504, threonine 506, glutamate 511, aspartate 536, aspartate 538, serine 540, tyrosine 542, glutamate 547, aspartate 570, aspartate 572, aspartate 574, arginine 576, and glutamate 581.

The protein belongs to the protein kinase superfamily. Ser/Thr protein kinase family. CDPK subfamily.

It localises to the membrane. It catalyses the reaction L-seryl-[protein] + ATP = O-phospho-L-seryl-[protein] + ADP + H(+). The catalysed reaction is L-threonyl-[protein] + ATP = O-phospho-L-threonyl-[protein] + ADP + H(+). Activated by calcium. Autophosphorylation may play an important role in the regulation of the kinase activity. Its function is as follows. May play a role in signal transduction pathways that involve calcium as a second messenger. In Oryza sativa subsp. japonica (Rice), this protein is Calcium-dependent protein kinase 27.